A 329-amino-acid chain; its full sequence is METIHFTKVHGSQNDFFLVDEEENHITEWSDEKRANFAIKLCDRKHSLGGADGILYVTKSSEVGPIGQMRVVNSDGSIASMCGNGLRTVARYLLEKHALTDAKVETMKAILDVKKATSLGFDIPTYQVEISPVKFAAETLPMHVGVEKLFNQVIPELDAELAFSAVSVPNPHLITFVDQAVLDSNKQEKLASYLNSENPYFPDGVNVSFVKRLSDDAIYVRTFERGVGFTNACGTAMSACSLIKKMLDNDILETPLNVYNDGGRVQVTAKKDAAGEISLQLIGNATFVSKGSVRYENDVVTELTNEATDEQGQYQALVKEVKEFLKTTE.

Residues Asn-14 and Asn-73 each contribute to the substrate site. The Proton donor role is filled by Cys-82. Substrate contacts are provided by residues 83 to 84, Asn-170, Asn-206, and 224 to 225; these read GN and ER. Cys-233 functions as the Proton acceptor in the catalytic mechanism. Position 234–235 (234–235) interacts with substrate; it reads GT.

The protein belongs to the diaminopimelate epimerase family. In terms of assembly, homodimer.

The protein localises to the cytoplasm. It catalyses the reaction (2S,6S)-2,6-diaminopimelate = meso-2,6-diaminopimelate. It participates in amino-acid biosynthesis; L-lysine biosynthesis via DAP pathway; DL-2,6-diaminopimelate from LL-2,6-diaminopimelate: step 1/1. Its function is as follows. Catalyzes the stereoinversion of LL-2,6-diaminopimelate (L,L-DAP) to meso-diaminopimelate (meso-DAP), a precursor of L-lysine and an essential component of the bacterial peptidoglycan. This chain is Diaminopimelate epimerase, found in Listeria monocytogenes serotype 4b (strain CLIP80459).